A 505-amino-acid polypeptide reads, in one-letter code: Maturase K (505 aa).

The protein belongs to the intron maturase 2 family. MatK subfamily.

The protein resides in the plastid. The protein localises to the chloroplast. Its function is as follows. Usually encoded in the trnK tRNA gene intron. Probably assists in splicing its own and other chloroplast group II introns. The polypeptide is Maturase K (Beta vulgaris (Sugar beet)).